The sequence spans 647 residues: Acetyl-coenzyme A synthetase (647 aa).

CoA contacts are provided by residues 190 to 193 (RGGR) and T310. Residues 386–388 (GEP), 410–415 (DTWWQT), D499, and R514 contribute to the ATP site. CoA is bound at residue S522. Position 525 (R525) interacts with ATP. The Mg(2+) site is built by V536, H538, and V541. A CoA-binding site is contributed by R583. K608 is subject to N6-acetyllysine.

Belongs to the ATP-dependent AMP-binding enzyme family. Mg(2+) serves as cofactor. In terms of processing, acetylated. Deacetylation by the SIR2-homolog deacetylase activates the enzyme.

The catalysed reaction is acetate + ATP + CoA = acetyl-CoA + AMP + diphosphate. Functionally, catalyzes the conversion of acetate into acetyl-CoA (AcCoA), an essential intermediate at the junction of anabolic and catabolic pathways. AcsA undergoes a two-step reaction. In the first half reaction, AcsA combines acetate with ATP to form acetyl-adenylate (AcAMP) intermediate. In the second half reaction, it can then transfer the acetyl group from AcAMP to the sulfhydryl group of CoA, forming the product AcCoA. The chain is Acetyl-coenzyme A synthetase from Xylella fastidiosa (strain Temecula1 / ATCC 700964).